The following is a 235-amino-acid chain: Replication protein (235 aa).

Residue Tyr149 participates in DNA binding.

Belongs to the Gram-positive plasmids replication protein type 1 family.

Its function is as follows. Produces a single-strand nick in a specific site of the plasmid, and this nick results in single-strand replication by rolling circle mechanism. This Bacillus sp protein is Replication protein (repB).